We begin with the raw amino-acid sequence, 162 residues long: Meiosis-specific protein HED1 (162 aa).

The interval 67–124 (KNLSENTGGGSPNGGAYLDAKKGVREQDQYQGGPSKELDRLQPPPSMKKSPPRKKKSL) is disordered. The segment covering 85–94 (DAKKGVREQD) has biased composition (basic and acidic residues).

As to quaternary structure, interacts with RAD51.

Its subcellular location is the nucleus. It is found in the chromosome. Its function is as follows. Involved in regulation of meiotic recombination and repair of DNA damage. Inhibits RAD51-mediated recombination when the meiotic recombination machinery is impaired. The polypeptide is Meiosis-specific protein HED1 (HED1) (Saccharomyces cerevisiae (strain ATCC 204508 / S288c) (Baker's yeast)).